The sequence spans 299 residues: Recombination-associated protein RdgC (299 aa).

This sequence belongs to the RdgC family.

The protein resides in the cytoplasm. The protein localises to the nucleoid. In terms of biological role, may be involved in recombination. This chain is Recombination-associated protein RdgC, found in Bordetella parapertussis (strain 12822 / ATCC BAA-587 / NCTC 13253).